The primary structure comprises 1517 residues: Neurite extension and migration factor (1517 aa).

Residues 381–405 show a composition bias toward basic and acidic residues; that stretch reads DKKKGKEEVHEDKSIEKKDEKDNGE. Disordered stretches follow at residues 381–416, 505–529, 644–697, 732–775, 1065–1084, 1161–1228, and 1372–1422; these read DKKK…PCSG, VNER…PKKR, SMEA…GLIG, KKIK…HMSE, RHSS…SPQS, DEPA…KKGK, and AGTP…SSED. Residues 644–663 show a composition bias toward polar residues; it reads SMEASASSKQVSFGSDQKQA. The span at 678–687 shows a compositional bias: low complexity; the sequence is SALLAAPSSA. The segment covering 764 to 773 has biased composition (polar residues); that stretch reads TPGTSNSSHM.

It localises to the nucleus. The protein resides in the cytoplasm. Functionally, involved in neurite outgrowth by regulating cell-cell adhesion via the N-cadherin signaling pathway. May act by regulating expression of protein-coding genes, such as N-cadherins and integrin beta-1 (ITGB1). This is Neurite extension and migration factor from Rattus norvegicus (Rat).